Here is a 256-residue protein sequence, read N- to C-terminus: Probable transcriptional regulatory protein A1I_03240 (256 aa).

The disordered stretch occupies residues 1 to 21 (MAGHSKFKNIQHRKGAQDKKR).

This sequence belongs to the TACO1 family.

The protein localises to the cytoplasm. The protein is Probable transcriptional regulatory protein A1I_03240 of Rickettsia bellii (strain OSU 85-389).